The primary structure comprises 303 residues: MLNSHNRTEERSTEDIILEPYTYLISQPGKDIRAKLISAFDLWLHVPKDVLCVINKIIGMLHNASLMIDDVQDDSDLRRGVPVAHHIYGVPQTINTANYVIFLALQEVMKLNIPSMMQVCTEELINLHRGQGIELYWRDSLTCPTEEEYIDMVNNKTSGLLRLAVRLMQAASESDIDYTPLVNIIGIHFQVRDDYMNLQSTSYTNNKGFCEDLTEGKFSFPIIHAIRKDPSNRQLLNIISQKPTSIEVKKYALEVIRKAGSFEYVREFLRQKEAESLKEIKRLGGNPLLEKYIETIRVEATND.

3 residues coordinate isopentenyl diphosphate: lysine 30, arginine 33, and histidine 62. Residues aspartate 69 and aspartate 73 each contribute to the Mg(2+) site. A dimethylallyl diphosphate-binding site is contributed by arginine 78. Position 79 (arginine 79) interacts with isopentenyl diphosphate. The dimethylallyl diphosphate site is built by lysine 156, threonine 157, glutamine 190, lysine 207, and lysine 217.

This sequence belongs to the FPP/GGPP synthase family. Mg(2+) serves as cofactor.

It localises to the cytoplasm. It carries out the reaction isopentenyl diphosphate + dimethylallyl diphosphate = (2E)-geranyl diphosphate + diphosphate. The enzyme catalyses isopentenyl diphosphate + (2E)-geranyl diphosphate = (2E,6E)-farnesyl diphosphate + diphosphate. It catalyses the reaction isopentenyl diphosphate + (2E,6E)-farnesyl diphosphate = (2E,6E,10E)-geranylgeranyl diphosphate + diphosphate. It participates in isoprenoid biosynthesis; farnesyl diphosphate biosynthesis; farnesyl diphosphate from geranyl diphosphate and isopentenyl diphosphate: step 1/1. The protein operates within isoprenoid biosynthesis; geranyl diphosphate biosynthesis; geranyl diphosphate from dimethylallyl diphosphate and isopentenyl diphosphate: step 1/1. It functions in the pathway isoprenoid biosynthesis; geranylgeranyl diphosphate biosynthesis; geranylgeranyl diphosphate from farnesyl diphosphate and isopentenyl diphosphate: step 1/1. In terms of biological role, catalyzes the trans-addition of the three molecules of IPP onto DMAPP to form geranylgeranyl pyrophosphate. This is Geranylgeranyl pyrophosphate synthase from Mucor circinelloides f. lusitanicus (Mucor racemosus var. lusitanicus).